The primary structure comprises 28 residues: Venom protein (28 aa).

Positions 1–28 (KEGYPDGQNGKKIPCAINDNISKTXEQA) are disordered. Residues 19 to 28 (DNISKTXEQA) show a composition bias toward polar residues.

As to expression, expressed by the venom gland.

Its subcellular location is the secreted. In terms of biological role, causes symptoms of mild intoxication and transient paralysis in insects (A.domestica). This chain is Venom protein, found in Rhopalurus junceus (Caribbean blue scorpion).